A 111-amino-acid polypeptide reads, in one-letter code: T cell receptor beta variable 30 (111 aa).

Residues 1-18 (MLCSLLALLLGTFFGVRS) form the signal peptide. The Ig-like domain maps to 19–111 (QTIHQWPATL…DSGFYLCAWS (93 aa)). C40 and C108 are joined by a disulfide. Residue N80 is glycosylated (N-linked (GlcNAc...) asparagine).

Alpha-beta TR is a heterodimer composed of an alpha and beta chain; disulfide-linked. The alpha-beta TR is associated with the transmembrane signaling CD3 coreceptor proteins to form the TR-CD3 (TcR or TCR). The assembly of alpha-beta TR heterodimers with CD3 occurs in the endoplasmic reticulum where a single alpha-beta TR heterodimer associates with one CD3D-CD3E heterodimer, one CD3G-CD3E heterodimer and one CD247 homodimer forming a stable octameric structure. CD3D-CD3E and CD3G-CD3E heterodimers preferentially associate with TR alpha and TR beta chains, respectively. The association of the CD247 homodimer is the last step of TcR assembly in the endoplasmic reticulum and is required for transport to the cell surface.

The protein resides in the cell membrane. Its function is as follows. V region of the variable domain of T cell receptor (TR) beta chain that participates in the antigen recognition. Alpha-beta T cell receptors are antigen specific receptors which are essential to the immune response and are present on the cell surface of T lymphocytes. Recognize peptide-major histocompatibility (MH) (pMH) complexes that are displayed by antigen presenting cells (APC), a prerequisite for efficient T cell adaptive immunity against pathogens. Binding of alpha-beta TR to pMH complex initiates TR-CD3 clustering on the cell surface and intracellular activation of LCK that phosphorylates the ITAM motifs of CD3G, CD3D, CD3E and CD247 enabling the recruitment of ZAP70. In turn ZAP70 phosphorylates LAT, which recruits numerous signaling molecules to form the LAT signalosome. The LAT signalosome propagates signal branching to three major signaling pathways, the calcium, the mitogen-activated protein kinase (MAPK) kinase and the nuclear factor NF-kappa-B (NF-kB) pathways, leading to the mobilization of transcription factors that are critical for gene expression and essential for T cell growth and differentiation. The T cell repertoire is generated in the thymus, by V-(D)-J rearrangement. This repertoire is then shaped by intrathymic selection events to generate a peripheral T cell pool of self-MH restricted, non-autoaggressive T cells. Post-thymic interaction of alpha-beta TR with the pMH complexes shapes TR structural and functional avidity. In Homo sapiens (Human), this protein is T cell receptor beta variable 30.